A 635-amino-acid chain; its full sequence is Leucine-rich repeat and fibronectin type-III domain-containing protein 4 (635 aa).

The first 16 residues, 1–16 (MAPPLLLLLLASGAAA), serve as a signal peptide directing secretion. Residues 17–48 (CPLPCVCQNLSESLSTLCAHRGLLFVPPNVDR) enclose the LRRNT domain. Topologically, residues 17 to 518 (CPLPCVCQNL…LQAHVLGGTL (502 aa)) are extracellular. N-linked (GlcNAc...) asparagine glycosylation is found at Asn-25 and Asn-70. LRR repeat units lie at residues 49 to 70 (RTVE…DFRN), 73 to 94 (GLVD…AFGD), 97 to 118 (SLRS…SLRG), 121 to 142 (NLQH…AFDD), 146 to 161 (SLED…RQVP), 170 to 191 (ALHT…AFAQ), and 194 to 215 (QLSR…PLFS). One can recognise an LRRCT domain in the interval 234-280 (NPLHCNCELLWLRRLARPDDLETCASPPGLAGRYFWAVPEGEFSCEP). The Ig-like domain maps to 281 to 367 (PLIARHTQRL…GEATARVELR (87 aa)). A disulfide bridge connects residues Cys-302 and Cys-351. N-linked (GlcNAc...) asparagine glycosylation is found at Asn-324, Asn-333, Asn-376, and Asn-440. The disordered stretch occupies residues 373–410 (HGGNSSAEGGRPGPSDIAASARTAAEGEGTLESEPAVQ). In terms of domain architecture, Fibronectin type-III spans 405–502 (SEPAVQVTEV…GCAHFSTLPA (98 aa)). Residues 519-539 (TVAVGGVLVAALLVFTVALLV) form a helical membrane-spanning segment. The Cytoplasmic segment spans residues 540 to 635 (RGRGAGNGRL…SAERLEESVV (96 aa)). The tract at residues 555 to 583 (HVQSQTNGGPSPTPKAHPPRSPPPRPQRS) is disordered. Over residues 565-580 (SPTPKAHPPRSPPPRP) the composition is skewed to pro residues. Phosphoserine is present on residues Ser-585 and Ser-626. The PDZ-binding motif lies at 632–635 (ESVV).

It belongs to the LRFN family. Can form heteromeric complexes with LRFN1, LRFN2, LRFN3 and LRFN5. Unable to form homophilic interactions across cell junctions. Interacts with DLG1, DLG2, DLG3 and DLG4. Post-translationally, glycosylated.

The protein localises to the membrane. In terms of biological role, promotes neurite outgrowth in hippocampal neurons. May play a role in redistributing DLG4 to the cell periphery. This is Leucine-rich repeat and fibronectin type-III domain-containing protein 4 (LRFN4) from Homo sapiens (Human).